The following is a 123-amino-acid chain: Ribonuclease P protein component (123 aa).

It belongs to the RnpA family. Consists of a catalytic RNA component (M1 or rnpB) and a protein subunit.

The enzyme catalyses Endonucleolytic cleavage of RNA, removing 5'-extranucleotides from tRNA precursor.. Functionally, RNaseP catalyzes the removal of the 5'-leader sequence from pre-tRNA to produce the mature 5'-terminus. It can also cleave other RNA substrates such as 4.5S RNA. The protein component plays an auxiliary but essential role in vivo by binding to the 5'-leader sequence and broadening the substrate specificity of the ribozyme. The chain is Ribonuclease P protein component from Streptococcus pneumoniae (strain JJA).